Here is a 250-residue protein sequence, read N- to C-terminus: MAVTKLVLVRHGESQWNNENRFTGWYDVDLSEKGVSEAKAAGKLLKAEGFSFDFAYTSVLKRAIHTLWNVLDELDQAWLPVEKSWKLNERHYGALQGLNKAETAEKYGDEQVKQWRRGFAVTPPELTKDDERYPGHDPRYAKLTDAELPTTESLALTIDRVVPYWNETILPRLKSGERVIIAAHGNSLRALVKYLDNMGEDEILELNIPTGVPLVYEFDENFKPIKHYYLGNAEEIAAKAAAVANQGKAK.

Substrate is bound by residues 10–17 (RHGESQWN), 23–24 (TG), Arg62, 89–92 (ERHY), Lys100, 116–117 (RR), and 185–186 (GN). His11 functions as the Tele-phosphohistidine intermediate in the catalytic mechanism. Glu89 serves as the catalytic Proton donor/acceptor.

It belongs to the phosphoglycerate mutase family. BPG-dependent PGAM subfamily. In terms of assembly, homodimer.

The enzyme catalyses (2R)-2-phosphoglycerate = (2R)-3-phosphoglycerate. It participates in carbohydrate degradation; glycolysis; pyruvate from D-glyceraldehyde 3-phosphate: step 3/5. Functionally, catalyzes the interconversion of 2-phosphoglycerate and 3-phosphoglycerate. This is 2,3-bisphosphoglycerate-dependent phosphoglycerate mutase from Klebsiella pneumoniae (strain 342).